A 530-amino-acid chain; its full sequence is MAPSGCPPSLPLCVCLFLASGFAQAGRLLVVPMDGSHWFTMQMIVEKLSHRGHEVVVVIPEVSWHMGKSLNFTVKLLLVLNTLEDLNYHFKFFAHNQWKTQEVGMFSLLKHSGKGFFELLFSHCRSLFKDKKLVEYLKQSSFDAVFLDPFDVCGLILAKYFSLPSVVFSGGIFCHYLDEGAQCPSPPSYVPRILSKFTDTMTFKERVWNHLSYMKERAFCPYFFKTAVEIASEVLQTPVTMRDLFSPVSIWMFRTDFVLEFPRPMMPNMVYIGGINCHQGKPLSKEFEAYVNASGEHGIVVFSLGSMVSEIPEKKAMEIAEALGRIPQTLLWRYTGTRPSNLAKNTILVKWLPQNDLLGHPKARAFITHSGSHGIYEGICNGVPMVMMPLFGDQMDNAKRMETRGAGVTLNVLEMTADDLENALKTVINNKSYKENIMRLSSLHKDRPIEPLDLAVFWVEYVMRHKGAPHLRPAAHDLTWYQYHSLDVIGFLLAIVLTVVFIVYKSCAYGCRKCFGGKGRVKKSHKSKTH.

The N-terminal stretch at 1–25 (MAPSGCPPSLPLCVCLFLASGFAQA) is a signal peptide. Residues Asn71, Asn292, and Asn430 are each glycosylated (N-linked (GlcNAc...) asparagine). The helical transmembrane segment at 488–504 (VIGFLLAIVLTVVFIVY) threads the bilayer.

This sequence belongs to the UDP-glycosyltransferase family. Homodimers. Homooligomer. Interacts with UGT1A1, UGT1A3, UGT1A4, UGT1A6, UGT1A7, UGT1A8, UGT1A9 and UGT1A10 to form heterodimers.

It is found in the endoplasmic reticulum membrane. The enzyme catalyses glucuronate acceptor + UDP-alpha-D-glucuronate = acceptor beta-D-glucuronoside + UDP + H(+). It carries out the reaction 17beta-estradiol + UDP-alpha-D-glucuronate = 17beta-estradiol 3-O-(beta-D-glucuronate) + UDP + H(+). The catalysed reaction is 17alpha-estradiol + UDP-alpha-D-glucuronate = 17alpha-estradiol 3-O-(beta-D-glucuronate) + UDP + H(+). It catalyses the reaction estrone + UDP-alpha-D-glucuronate = estrone 3-O-(beta-D-glucuronate) + UDP + H(+). The enzyme catalyses 16alpha,17alpha-estriol + UDP-alpha-D-glucuronate = 16alpha,17alpha-estriol 3-O-(beta-D-glucuronate) + UDP + H(+). It carries out the reaction 2-hydroxy-17beta-estradiol + UDP-alpha-D-glucuronate = 2-hydroxy-17beta-estradiol 3-O-(beta-D-glucuronate) + UDP + H(+). The catalysed reaction is 2-hydroxy-17beta-estradiol + UDP-alpha-D-glucuronate = 17beta-estradiol 2-O-(beta-D-glucuronate) + UDP + H(+). It catalyses the reaction 2-hydroxyestrone + UDP-alpha-D-glucuronate = 2-hydroxyestrone 3-O-(beta-D-glucuronate) + UDP + H(+). The enzyme catalyses 4-hydroxy-17beta-estradiol + UDP-alpha-D-glucuronate = 4-hydroxy-17beta-estradiol 3-O-(beta-D-glucuronate) + UDP + H(+). It carries out the reaction 4-hydroxy-17beta-estradiol + UDP-alpha-D-glucuronate = 17beta-estradiol 4-O-(beta-D-glucuronate) + UDP + H(+). The catalysed reaction is 4-hydroxyestrone + UDP-alpha-D-glucuronate = 4-hydroxyestrone 3-O-(beta-D-glucuronate) + UDP + H(+). It catalyses the reaction 4-hydroxyestrone + UDP-alpha-D-glucuronate = estrone 4-O-(beta-D-glucuronate) + UDP + H(+). The enzyme catalyses 2-methoxy-17beta-estradiol + UDP-alpha-D-glucuronate = 2-methoxy-17beta-estradiol 3-O-(beta-D-glucuronate) + UDP + H(+). It carries out the reaction 2-methoxyestrone + UDP-alpha-D-glucuronate = 2-methoxyestrone 3-O-(beta-D-glucuronate) + UDP + H(+). The catalysed reaction is 4-methoxy-17beta-estradiol + UDP-alpha-D-glucuronate = 4-methoxy-17beta-estradiol 3-O-(beta-D-glucuronate) + UDP + H(+). It catalyses the reaction 4-methoxyestrone + UDP-alpha-D-glucuronate = 4-methoxyestrone 3-O-(beta-D-glucuronate) + UDP + H(+). The enzyme catalyses 17beta-hydroxy-5alpha-androstan-3-one + UDP-alpha-D-glucuronate = 5alpha-dihydrotestosterone 17-O-(beta-D-glucuronate) + UDP + H(+). It carries out the reaction 5alpha-dihydrotestosterone 17-O-(beta-D-glucuronate) + UDP-alpha-D-glucuronate = 5alpha-dihydrotestosterone 17-O-[beta-D-glucuronosyl-(1-&gt;2)-glucuronate] + UDP + H(+). The catalysed reaction is prunetin + UDP-alpha-D-glucuronate = prunetin-4'-O-beta-D-glucuronide + UDP. It catalyses the reaction prunetin + UDP-alpha-D-glucuronate = prunetin-5-O-beta-D-glucuronide + UDP. The enzyme catalyses (E)-ferulate + UDP-alpha-D-glucuronate = (E)-4-O-(beta-D-glucuronosyl)-ferulate + UDP + H(+). It carries out the reaction (E)-ferulate + UDP-alpha-D-glucuronate = (E)-ferulic acid beta-D-glucuronate ester + UDP. The catalysed reaction is candesartan + UDP-alpha-D-glucuronate = candesartan O-beta-D-glucuronoside + UDP. It catalyses the reaction mycophenolate + UDP-alpha-D-glucuronate = mycophenolate 7-O-beta-D-glucuronide + UDP + H(+). Its function is as follows. UDP-glucuronosyltransferase (UGT) that catalyzes phase II biotransformation reactions in which lipophilic substrates are conjugated with glucuronic acid to increase the metabolite's water solubility, thereby facilitating excretion into either the urine or bile. Essential for the elimination and detoxification of drugs, xenobiotics and endogenous compounds. Catalyzes the glucuronidation of endogenous steroid hormones such as androgens and estrogens. Produces dihydrotestosterone (DHT) diglucuronide from the DHT after two subsequent glucoronidation steps. Involved in the glucuronidation of the phytochemical ferulic acid at the phenolic or the carboxylic acid group. Also catalyzes the glucuronidation of the isoflavones genistein, daidzein, glycitein, formononetin, biochanin A and prunetin, which are phytoestrogens with anticancer and cardiovascular properties. Involved in the glucuronidation of the AGTR1 angiotensin receptor antagonist caderastan, a drug which can inhibit the effect of angiotensin II. Also metabolizes mycophenolate, an immunosuppressive agent. The chain is UDP-glucuronosyltransferase 1A8 from Rattus norvegicus (Rat).